The chain runs to 184 residues: Peptide deformylase 2 (184 aa).

Fe cation contacts are provided by C110 and H153. Residue E154 is part of the active site. Residue H157 coordinates Fe cation.

This sequence belongs to the polypeptide deformylase family. Fe(2+) is required as a cofactor.

It carries out the reaction N-terminal N-formyl-L-methionyl-[peptide] + H2O = N-terminal L-methionyl-[peptide] + formate. Removes the formyl group from the N-terminal Met of newly synthesized proteins. Requires at least a dipeptide for an efficient rate of reaction. N-terminal L-methionine is a prerequisite for activity but the enzyme has broad specificity at other positions. This is Peptide deformylase 2 (defB) from Bacillus subtilis (strain 168).